The sequence spans 179 residues: Stathmin-2 (179 aa).

A membrane attachment region spans residues 1–26 (MAKTAMAYKEKMKELSMLSLICSCFY). At Ser16 the chain carries Phosphoserine. Residues Cys22 and Cys24 are each lipidated (S-palmitoyl cysteine). Residues 38–179 (DDMEVKQINK…NKELQVELSG (142 aa)) form the SLD domain. Residues 39 to 96 (DMEVKQINKRASGQAFELILKPPSPISEAPRTLASPKKKDLSLEEIQKKLEAAEGRRK) are regulatory/phosphorylation domain. Ser50 is subject to Phosphoserine. A phosphoserine; by MAPK8 mark is found at Ser62 and Ser73. Positions 75-179 (KKKDLSLEEI…NKELQVELSG (105 aa)) form a coiled coil. Residues Ser80 and Ser97 each carry the phosphoserine modification.

The protein belongs to the stathmin family. As to quaternary structure, interacts with ITM2C. Interacts with MAPK8. Interacts with KIFBP. Interacts (via the N-terminal region) with CIB1 (via C-terminal region); the interaction is direct, occurs in a calcium-dependent manner and attenuates the neurite outgrowth inhibition of STMN2. Sumoylated. Post-translationally, phosphorylated by MAPK9 and MAPK10 in the developing brain cortex. Phosphorylated mostly by MAPK8. In terms of processing, N-terminal palmitoylation promotes specific anchoring to the cytosolic leaflet of Golgi membranes and subsequent vesicular trafficking along dendrites and axons. Neuronal Stathmins are substrates for palmitoyltransferases ZDHHC3, ZDHHC7 and ZDHHC15. As to expression, expressed in neurons (at protein level). Present in growth cones and abundant in developing neurons.

Its subcellular location is the cytoplasm. It localises to the perinuclear region. The protein localises to the cell projection. The protein resides in the growth cone. It is found in the axon. Its subcellular location is the membrane. It localises to the golgi apparatus. The protein localises to the endosome. The protein resides in the lamellipodium. Regulator of microtubule stability. When phosphorylated by MAPK8, stabilizes microtubules and consequently controls neurite length in cortical neurons. In the developing brain, negatively regulates the rate of exit from multipolar stage and retards radial migration from the ventricular zone. The sequence is that of Stathmin-2 (Stmn2) from Rattus norvegicus (Rat).